Consider the following 155-residue polypeptide: 2-C-methyl-D-erythritol 2,4-cyclodiphosphate synthase (155 aa).

D8 and H10 together coordinate a divalent metal cation. Residues 8-10 and 34-35 contribute to the 4-CDP-2-C-methyl-D-erythritol 2-phosphate site; these read DVH and HS. An a divalent metal cation-binding site is contributed by H42. 4-CDP-2-C-methyl-D-erythritol 2-phosphate-binding positions include 56 to 58, 61 to 65, 100 to 106, 132 to 135, F139, and K142; these read DIG, FPDSD, AQKPKML, and TTEE.

The protein belongs to the IspF family. Homotrimer. Requires a divalent metal cation as cofactor.

It catalyses the reaction 4-CDP-2-C-methyl-D-erythritol 2-phosphate = 2-C-methyl-D-erythritol 2,4-cyclic diphosphate + CMP. Its pathway is isoprenoid biosynthesis; isopentenyl diphosphate biosynthesis via DXP pathway; isopentenyl diphosphate from 1-deoxy-D-xylulose 5-phosphate: step 4/6. Functionally, involved in the biosynthesis of isopentenyl diphosphate (IPP) and dimethylallyl diphosphate (DMAPP), two major building blocks of isoprenoid compounds. Catalyzes the conversion of 4-diphosphocytidyl-2-C-methyl-D-erythritol 2-phosphate (CDP-ME2P) to 2-C-methyl-D-erythritol 2,4-cyclodiphosphate (ME-CPP) with a corresponding release of cytidine 5-monophosphate (CMP). The chain is 2-C-methyl-D-erythritol 2,4-cyclodiphosphate synthase from Clostridium botulinum (strain Okra / Type B1).